The following is a 258-amino-acid chain: Acetylglutamate kinase (258 aa).

Substrate contacts are provided by residues 41–42 (GG), Arg-63, and Asn-156.

It belongs to the acetylglutamate kinase family. ArgB subfamily.

Its subcellular location is the cytoplasm. The enzyme catalyses N-acetyl-L-glutamate + ATP = N-acetyl-L-glutamyl 5-phosphate + ADP. Its pathway is amino-acid biosynthesis; L-arginine biosynthesis; N(2)-acetyl-L-ornithine from L-glutamate: step 2/4. Functionally, catalyzes the ATP-dependent phosphorylation of N-acetyl-L-glutamate. This is Acetylglutamate kinase from Geobacillus thermodenitrificans (strain NG80-2).